Reading from the N-terminus, the 253-residue chain is Tryptophan synthase alpha chain (253 aa).

Residues Glu47 and Asp58 each act as proton acceptor in the active site.

This sequence belongs to the TrpA family. Tetramer of two alpha and two beta chains.

It carries out the reaction (1S,2R)-1-C-(indol-3-yl)glycerol 3-phosphate + L-serine = D-glyceraldehyde 3-phosphate + L-tryptophan + H2O. It functions in the pathway amino-acid biosynthesis; L-tryptophan biosynthesis; L-tryptophan from chorismate: step 5/5. The alpha subunit is responsible for the aldol cleavage of indoleglycerol phosphate to indole and glyceraldehyde 3-phosphate. This chain is Tryptophan synthase alpha chain, found in Lactococcus lactis subsp. cremoris (strain SK11).